We begin with the raw amino-acid sequence, 349 residues long: MNVPDRKKALEAAIAYIEKQFGSGSIMSLGKHSASHEISTIKTGALSLDLALGIGGVPKGRIVEIFGPESSGKTTLATHIVANAQKMGGVAAYIDAEHALDPSYASLIGANIHDLMISQPDCGEDALSIAELLARSGAVDVIVIDSVAALVPKSELEGDIGDVHVGLQARMMSQALRKLTATLARSQTCAIFINQIREKIGVSFGNPETTTGGRALKFYSSIRIDIRRIGAIKGNESFDLGNRIKVKVAKNKLAPPFKTAEFDILFNEGISSAGCILDLAVEHNIVEKKGSWFNYQDRKLGQGREAVREELKKNKKLLEELEKRILEVTASPKTIVEEKKEELAMQPVA.

67–74 (GPESSGKT) contributes to the ATP binding site.

It belongs to the RecA family.

It is found in the cytoplasm. In terms of biological role, can catalyze the hydrolysis of ATP in the presence of single-stranded DNA, the ATP-dependent uptake of single-stranded DNA by duplex DNA, and the ATP-dependent hybridization of homologous single-stranded DNAs. It interacts with LexA causing its activation and leading to its autocatalytic cleavage. The sequence is that of Protein RecA from Chlamydia abortus (strain DSM 27085 / S26/3) (Chlamydophila abortus).